A 180-amino-acid chain; its full sequence is NADH-quinone oxidoreductase subunit I (180 aa).

2 4Fe-4S ferredoxin-type domains span residues 50–80 (LTRNIDGGERCVACNLCAVVCPVDCISLQKS) and 90–119 (KFFRINFSRCIFCGLCEEACPTAAIQLMPD). Positions 60, 63, 66, 70, 99, 102, 105, and 109 each coordinate [4Fe-4S] cluster.

It belongs to the complex I 23 kDa subunit family. In terms of assembly, NDH-1 is composed of 13 different subunits. Subunits NuoA, H, J, K, L, M, N constitute the membrane sector of the complex. [4Fe-4S] cluster serves as cofactor.

The protein resides in the cell membrane. The catalysed reaction is a quinone + NADH + 5 H(+)(in) = a quinol + NAD(+) + 4 H(+)(out). In terms of biological role, NDH-1 shuttles electrons from NADH, via FMN and iron-sulfur (Fe-S) centers, to quinones in the respiratory chain. The immediate electron acceptor for the enzyme in this species is believed to be ubiquinone. Couples the redox reaction to proton translocation (for every two electrons transferred, four hydrogen ions are translocated across the cytoplasmic membrane), and thus conserves the redox energy in a proton gradient. This is NADH-quinone oxidoreductase subunit I from Buchnera aphidicola subsp. Schizaphis graminum (strain Sg).